A 413-amino-acid polypeptide reads, in one-letter code: Protein LAZY 1 (413 aa).

A helical transmembrane segment spans residues 71–91 (FTFGGSGLLTIGTLGIAAVAV). Acidic residues predominate over residues 103–124 (DADADSDFDDNDDTAGDDEDQV). 2 disordered regions span residues 103-127 (DADA…VDSA) and 261-308 (EDGG…ASAT). 2 consecutive short sequence motifs (nuclear localization signal) follow at residues 275-298 (RKAG…EKVP) and 338-345 (KKSRKRGS).

Belongs to the LAZY family. As to expression, expressed in the node of the stem, initiating leaf founder cells, young leaf primordia, tips of axillary meristems, spikelet pair meristems of developing tassels and ears, male flower primordia, tassels, ears, silks and seeds. Expressed in leaf sheaths, leaf pulvinus and shoot apical meristem (SAM).

It is found in the cell membrane. The protein localises to the nucleus. Functionally, involved in the regulation of shoot gravitropism, and tassel and ear development through the regulation of polar auxin transport (PAT) and auxin signaling. Acts as a negative regulator of basipetal PAT, but positive regulator of lateral auxin transport. Involved in the regulation of shoot gravitropism and leaf angle through the regulation of cell development. This Zea mays (Maize) protein is Protein LAZY 1.